The sequence spans 1410 residues: Pogo transposable element with ZNF domain (1410 aa).

Positions Arg238–Pro291 are disordered. Positions Ser239–Ser266 are enriched in low complexity. The span at Leu267–Pro284 shows a compositional bias: polar residues. Lys319 is covalently cross-linked (Glycyl lysine isopeptide (Lys-Gly) (interchain with G-Cter in SUMO2)). The segment at Gln332 to Thr361 is disordered. Ser333 is modified (phosphoserine). The span at Ala345 to Thr361 shows a compositional bias: polar residues. Lys359 is covalently cross-linked (Glycyl lysine isopeptide (Lys-Gly) (interchain with G-Cter in SUMO2)). At Ser363 the chain carries Phosphoserine. Residues Lys375–Cys397 form a C2H2-type 1; atypical zinc finger. A disordered region spans residues Lys409–Asn456. Lys422 is covalently cross-linked (Glycyl lysine isopeptide (Lys-Gly) (interchain with G-Cter in SUMO2)). Ser425 bears the Phosphoserine mark. Thr439 carries the post-translational modification Phosphothreonine. Ser445 is modified (phosphoserine). Residue Lys449 forms a Glycyl lysine isopeptide (Lys-Gly) (interchain with G-Cter in SUMO2) linkage. A Phosphothreonine modification is found at Thr463. Residue Lys489 forms a Glycyl lysine isopeptide (Lys-Gly) (interchain with G-Cter in SUMO2) linkage. 6 C2H2-type zinc fingers span residues Phe494–His516, Thr530–His553, Thr560–His583, Tyr590–His613, Leu619–His641, and Tyr647–His670. A Glycyl lysine isopeptide (Lys-Gly) (interchain with G-Cter in SUMO2) cross-link involves residue Lys629. Residue Lys677 forms a Glycyl lysine isopeptide (Lys-Gly) (interchain with G-Cter in SUMO2) linkage. The tract at residues Ser693–Ala715 is disordered. Residues Pro701–Ser710 show a composition bias toward polar residues. Residues Val771 to His794 form a C2H2-type 8 zinc finger. A Glycyl lysine isopeptide (Lys-Gly) (interchain with G-Cter in SUMO2) cross-link involves residue Lys801. Positions Val810–Leu850 are required for interaction with CBX5. Residues Leu815–His840 form a C2H2-type 9 zinc finger. Ser856 carries the phosphoserine modification. Disordered regions lie at residues Arg857–Leu927 and Val942–Lys969. Residues Gln860–Val870 are compositionally biased toward basic and acidic residues. Residue Lys883 forms a Glycyl lysine isopeptide (Lys-Gly) (interchain with G-Cter in SUMO2) linkage. A compositionally biased stretch (low complexity) spans Ala892 to Ala915. The 71-residue stretch at Gly1015 to Ala1085 folds into the HTH CENPB-type domain. Residues Leu1117–Phe1323 form the DDE-1 domain. Ser1338 carries the phosphoserine modification. Positions Thr1340–Ser1360 form a coiled coil. Residues Ser1360–Phe1400 form a disordered region. Phosphoserine occurs at positions 1364 and 1367. A Phosphothreonine modification is found at Thr1368. 2 positions are modified to phosphoserine: Ser1373 and Ser1374. Residue Thr1378 is modified to Phosphothreonine. Residues Glu1380–Asp1404 carry the Integrase domain-binding motif (IBM) motif. Ser1392 is subject to Phosphoserine; by CK2. Position 1394 is a phosphothreonine (Thr1394). A Phosphoserine; by CK2 modification is found at Ser1396.

As to quaternary structure, interacts with CBX1, CBX3, MAD2L2 and CHAMP1. Interacts with CBX5; POGZ competes with PXVXL motif-containing proteins such as INCENP and TRIM28 for interaction with CBX5. Interacts (via IBM motif) with PSIP1 isoform 1 (via IBD domain); phosphorylation increases its affinity for PSIP1. Interacts with HDGFL2. Phosphorylation increases its interaction with PSIP1.

The protein resides in the nucleus. It localises to the chromosome. Its subcellular location is the cytoplasm. Its function is as follows. Plays a role in mitotic cell cycle progression and is involved in kinetochore assembly and mitotic sister chromatid cohesion. Probably through its association with CBX5 plays a role in mitotic chromosome segregation by regulating aurora kinase B/AURKB activation and AURKB and CBX5 dissociation from chromosome arms. Promotes the repair of DNA double-strand breaks through the homologous recombination pathway. This is Pogo transposable element with ZNF domain (POGZ) from Homo sapiens (Human).